A 455-amino-acid polypeptide reads, in one-letter code: Serine--tRNA ligase (455 aa).

252 to 254 (TAE) contributes to the L-serine binding site. Residues 283–285 (RKE) and Val-299 contribute to the ATP site. Glu-306 lines the L-serine pocket. 370 to 373 (EVVS) contacts ATP. Residue Thr-406 coordinates L-serine.

Belongs to the class-II aminoacyl-tRNA synthetase family. Type-1 seryl-tRNA synthetase subfamily. Homodimer. The tRNA molecule binds across the dimer.

It localises to the cytoplasm. It catalyses the reaction tRNA(Ser) + L-serine + ATP = L-seryl-tRNA(Ser) + AMP + diphosphate + H(+). The catalysed reaction is tRNA(Sec) + L-serine + ATP = L-seryl-tRNA(Sec) + AMP + diphosphate + H(+). Its pathway is aminoacyl-tRNA biosynthesis; selenocysteinyl-tRNA(Sec) biosynthesis; L-seryl-tRNA(Sec) from L-serine and tRNA(Sec): step 1/1. Catalyzes the attachment of serine to tRNA(Ser). Is also able to aminoacylate tRNA(Sec) with serine, to form the misacylated tRNA L-seryl-tRNA(Sec), which will be further converted into selenocysteinyl-tRNA(Sec). This is Serine--tRNA ligase from Thermococcus kodakarensis (strain ATCC BAA-918 / JCM 12380 / KOD1) (Pyrococcus kodakaraensis (strain KOD1)).